The primary structure comprises 125 residues: Fluoride-specific ion channel FluC (125 aa).

The next 4 membrane-spanning stretches (helical) occupy residues 1–21, 32–52, 68–88, and 101–121; these read MIQA…RYYV, AFPW…GVFA, LLIT…LDAI, and IYIA…LAVM. Residues G75 and T78 each contribute to the Na(+) site.

It belongs to the fluoride channel Fluc/FEX (TC 1.A.43) family.

Its subcellular location is the cell inner membrane. The catalysed reaction is fluoride(in) = fluoride(out). With respect to regulation, na(+) is not transported, but it plays an essential structural role and its presence is essential for fluoride channel function. Its function is as follows. Fluoride-specific ion channel. Important for reducing fluoride concentration in the cell, thus reducing its toxicity. This is Fluoride-specific ion channel FluC from Rhizobium etli (strain CIAT 652).